The following is a 299-amino-acid chain: Peroxisomal biogenesis factor 19 (299 aa).

The interval 1-61 (MAAAEEGCGV…KRAPGDTAKD (61 aa)) is disordered. A2 carries the N-acetylalanine modification. The segment at 2–56 (AAAEEGCGVGVEDDRELEELLESALDDFDKAKPSPEHAPTISAPDASGPQKRAPG) is docking to the peroxisome membrane and binding to PEX3. The interval 2–91 (AAAEEGCGVG…QATAEFEKAM (90 aa)) is necessary for PEX19 function on peroxisome biogenesis. The segment covering 12-27 (VEDDRELEELLESALD) has biased composition (acidic residues). A phosphoserine mark is found at S35 and S66. Phosphothreonine is present on T236. Cysteine methyl ester is present on C296. C296 carries S-farnesyl cysteine lipidation. A propeptide spans 297 to 299 (LIM) (removed in mature form).

This sequence belongs to the peroxin-19 family. As to quaternary structure, interacts with a broad range of peroxisomal membrane proteins, including PEX3, PEX10, PEX11A, PEX11B, PEX12, PEX13, PEX14 and PEX16, PXMP2/PMP22, PXMP4/PMP24, SLC25A17/PMP34, ABCD1/ALDP, ABCD2/ALDRP, and ABCD3/PMP70. Also interacts with the tumor suppressor CDKN2A/p19ARF.

It localises to the cytoplasm. The protein localises to the peroxisome membrane. Necessary for early peroxisomal biogenesis. Acts both as a cytosolic chaperone and as an import receptor for peroxisomal membrane proteins (PMPs). Binds and stabilizes newly synthesized PMPs in the cytoplasm by interacting with their hydrophobic membrane-spanning domains, and targets them to the peroxisome membrane by binding to the integral membrane protein PEX3. Excludes CDKN2A from the nucleus and prevents its interaction with MDM2, which results in active degradation of TP53. The sequence is that of Peroxisomal biogenesis factor 19 (Pex19) from Mus musculus (Mouse).